The following is a 479-amino-acid chain: PTS system glucose-specific EIICB component (479 aa).

The region spanning 1 to 388 (MFKNAFSNLQ…FNLKTPGREK (388 aa)) is the PTS EIIC type-1 domain. Helical transmembrane passes span 15 to 35 (SLML…IGSA), 51 to 71 (AGSS…ALGF), 80 to 100 (LAAV…IPIF), 112 to 132 (YLLD…AYIF), 152 to 172 (FVPI…SIIW), 252 to 272 (GGFI…WHCA), 280 to 300 (IGGI…TEPI), 305 to 325 (ILVA…AFPI), and 356 to 376 (LFPI…YFMI). The region spanning 399–479 (KETALLVISI…IDNYMSNTNQ (81 aa)) is the PTS EIIB type-1 domain. Cysteine 421 (phosphocysteine intermediate; for EIIB activity) is an active-site residue. Cysteine 421 is subject to Phosphocysteine.

It is found in the cell inner membrane. The catalysed reaction is N(pros)-phospho-L-histidyl-[protein] + D-glucose(out) = D-glucose 6-phosphate(in) + L-histidyl-[protein]. In terms of biological role, the phosphoenolpyruvate-dependent sugar phosphotransferase system (sugar PTS), a major carbohydrate active transport system, catalyzes the phosphorylation of incoming sugar substrates concomitantly with their translocation across the cell membrane. The enzyme II complex composed of PtsG and Crr is involved in glucose transport. This Buchnera aphidicola subsp. Baizongia pistaciae (strain Bp) protein is PTS system glucose-specific EIICB component (ptsG).